Consider the following 367-residue polypeptide: MNIKGKALLAGCIALAFSNMALAEDIKVAVVGAMSGPVAQYGDQEFTGAEQAVADINAKGGIKGNKLQIVKYDDACDPKQAVAVANKVVNDGIKYVIGHLCSSSTQPASDIYEDEGILMITPAATAPELTARGYQLILRTTGLDSDQGPTAAKYILEKVKPQRIAIVHDKQQYGEGLARAVQDGLKKGNANVVFFDGITAGEKDFSTLVARLKKENIDFVYYGGYHPEMGQILRQARAAGLKTQFMGPEGVANVSLSNIAGESAEGLLVTKPKNYDQVPANKPIVDAIKAKKQDPSGAFVWTTYAALQSLQAGLNQSDDPAEIAKYLKANSVDTVMGPLTWDEKGDLKGFEFGVFDWHANGTATDAK.

Residues 1–23 form the signal peptide; it reads MNIKGKALLAGCIALAFSNMALA. The cysteines at positions 76 and 101 are disulfide-linked.

This sequence belongs to the leucine-binding protein family.

Its subcellular location is the periplasm. In terms of biological role, this protein is a component of the leucine, isoleucine, valine, (threonine) transport system, which is one of the two periplasmic binding protein-dependent transport systems of the high-affinity transport of the branched-chain amino acids. This chain is Leu/Ile/Val-binding protein (livJ), found in Escherichia coli O157:H7.